The chain runs to 99 residues: DNA-binding protein HU (99 aa).

Residues 67 to 86 form a disordered region; that stretch reads REGRNPKTGAKMKIDAYNQP.

The protein belongs to the bacterial histone-like protein family. As to quaternary structure, homodimer.

Its function is as follows. Histone-like DNA-binding protein which is capable of wrapping DNA to stabilize it, and thus to prevent its denaturation under extreme environmental conditions. This is DNA-binding protein HU (hup) from Rickettsia felis (strain ATCC VR-1525 / URRWXCal2) (Rickettsia azadi).